Here is a 937-residue protein sequence, read N- to C-terminus: Isoleucine--tRNA ligase (937 aa).

The 'HIGH' region signature appears at 58–68; that stretch reads PYANGDIHIGH. Glu-561 contributes to the L-isoleucyl-5'-AMP binding site. The 'KMSKS' region signature appears at 602–606; the sequence is KMSKS. Residue Lys-605 coordinates ATP. The Zn(2+) site is built by Cys-900, Cys-903, Cys-920, and Cys-923.

It belongs to the class-I aminoacyl-tRNA synthetase family. IleS type 1 subfamily. In terms of assembly, monomer. Zn(2+) serves as cofactor.

The protein resides in the cytoplasm. The catalysed reaction is tRNA(Ile) + L-isoleucine + ATP = L-isoleucyl-tRNA(Ile) + AMP + diphosphate. In terms of biological role, catalyzes the attachment of isoleucine to tRNA(Ile). As IleRS can inadvertently accommodate and process structurally similar amino acids such as valine, to avoid such errors it has two additional distinct tRNA(Ile)-dependent editing activities. One activity is designated as 'pretransfer' editing and involves the hydrolysis of activated Val-AMP. The other activity is designated 'posttransfer' editing and involves deacylation of mischarged Val-tRNA(Ile). The protein is Isoleucine--tRNA ligase of Alcanivorax borkumensis (strain ATCC 700651 / DSM 11573 / NCIMB 13689 / SK2).